A 324-amino-acid chain; its full sequence is Galectin-4 (324 aa).

2 Galectin domains span residues 19–150 and 196–324; these read YKRP…INFL and YVGT…YVQI. 257-263 contacts a beta-D-galactoside; that stretch reads WGSEERK. Phosphoserine is present on serine 259.

As to quaternary structure, monomer. In terms of tissue distribution, highly expressed in full-length form in small and large intestine and stomach but was not detected in other tissues including lung, liver, kidney and spleen.

Its function is as follows. Galectin that binds lactose and a related range of sugars. The protein is Galectin-4 (Lgals4) of Rattus norvegicus (Rat).